Consider the following 139-residue polypeptide: Protein AC53 (139 aa).

The protein localises to the host cytoplasm. Its subcellular location is the host nucleus. In terms of biological role, plays a role in nucleocapsid assembly. The sequence is that of Protein AC53 (AC53) from Lepidoptera (butterflies and moths).